The sequence spans 213 residues: ATP synthase peripheral stalk subunit OSCP, mitochondrial (213 aa).

A mitochondrion-targeting transit peptide spans 1 to 23 (MASQAVSGLSRQVRCFSTSVVRP). Positions 5-23 (AVSGLSRQVRCFSTSVVRP) match the SIFI-degron motif. 4 positions are modified to N6-acetyllysine: Lys-54, Lys-60, Lys-70, and Lys-73. Lys-90 is subject to N6-succinyllysine. An N6-acetyllysine; alternate mark is found at Lys-100, Lys-158, and Lys-162. Lys-100, Lys-158, and Lys-162 each carry N6-succinyllysine; alternate. N6-acetyllysine is present on residues Lys-172, Lys-176, and Lys-192. At Lys-199 the chain carries N6-succinyllysine.

Belongs to the ATPase delta chain family. In terms of assembly, component of the ATP synthase complex composed at least of ATP5F1A/subunit alpha, ATP5F1B/subunit beta, ATP5MC1/subunit c (homooctomer), MT-ATP6/subunit a, MT-ATP8/subunit 8, ATP5ME/subunit e, ATP5MF/subunit f, ATP5MG/subunit g, ATP5MK/subunit k, ATP5MJ/subunit j, ATP5F1C/subunit gamma, ATP5F1D/subunit delta, ATP5F1E/subunit epsilon, ATP5PF/subunit F6, ATP5PB/subunit b, ATP5PD/subunit d, ATP5PO/subunit OSCP. ATP synthase complex consists of a soluble F(1) head domain (subunits alpha(3) and beta(3)) - the catalytic core - and a membrane F(0) domain - the membrane proton channel (subunits c, a, 8, e, f, g, k and j). These two domains are linked by a central stalk (subunits gamma, delta, and epsilon) rotating inside the F1 region and a stationary peripheral stalk (subunits F6, b, d, and OSCP). Acetylation at Lys-162 decreases ATP production. Deacetylated by SIRT3. Post-translationally, in response to mitochondrial stress, the precursor protein is ubiquitinated by the SIFI complex in the cytoplasm before mitochondrial import, leading to its degradation. Within the SIFI complex, UBR4 initiates ubiquitin chain that are further elongated or branched by KCMF1.

The protein localises to the mitochondrion. It localises to the mitochondrion inner membrane. Subunit OSCP, of the mitochondrial membrane ATP synthase complex (F(1)F(0) ATP synthase or Complex V) that produces ATP from ADP in the presence of a proton gradient across the membrane which is generated by electron transport complexes of the respiratory chain. ATP synthase complex consist of a soluble F(1) head domain - the catalytic core - and a membrane F(1) domain - the membrane proton channel. These two domains are linked by a central stalk rotating inside the F(1) region and a stationary peripheral stalk. During catalysis, ATP synthesis in the catalytic domain of F(1) is coupled via a rotary mechanism of the central stalk subunits to proton translocation. In vivo, can only synthesize ATP although its ATP hydrolase activity can be activated artificially in vitro. Part of the complex F(0) domain. Part of the complex F(0) domain and the peripheric stalk, which acts as a stator to hold the catalytic alpha(3)beta(3) subcomplex and subunit a/ATP6 static relative to the rotary elements. This is ATP synthase peripheral stalk subunit OSCP, mitochondrial from Sus scrofa (Pig).